The primary structure comprises 120 residues: NAD(P)H-quinone oxidoreductase subunit 3, chloroplastic (120 aa).

A run of 3 helical transmembrane segments spans residues 10–30 (LWFFLVIASIVPILAFTISEI), 64–84 (MFALVFVVFDVETVFLYPWAI), and 89–109 (LGISAFIEALLFILILMVGLV).

Belongs to the complex I subunit 3 family. NDH is composed of at least 16 different subunits, 5 of which are encoded in the nucleus.

Its subcellular location is the plastid. It localises to the chloroplast thylakoid membrane. The enzyme catalyses a plastoquinone + NADH + (n+1) H(+)(in) = a plastoquinol + NAD(+) + n H(+)(out). It catalyses the reaction a plastoquinone + NADPH + (n+1) H(+)(in) = a plastoquinol + NADP(+) + n H(+)(out). Functionally, NDH shuttles electrons from NAD(P)H:plastoquinone, via FMN and iron-sulfur (Fe-S) centers, to quinones in the photosynthetic chain and possibly in a chloroplast respiratory chain. The immediate electron acceptor for the enzyme in this species is believed to be plastoquinone. Couples the redox reaction to proton translocation, and thus conserves the redox energy in a proton gradient. The protein is NAD(P)H-quinone oxidoreductase subunit 3, chloroplastic of Chara vulgaris (Common stonewort).